A 512-amino-acid chain; its full sequence is Alpha-amylase (512 aa).

The signal sequence occupies residues 1–29 (MKQQKRLYARLLTLLFALIFLLPHSAAAA). Residues N133, D190, A210, D212, D223, D229, D231, and D233 each contribute to the Ca(2+) site. Residue D190 participates in Na(+) binding. The Na(+) site is built by D212, D223, and D229. The active-site Nucleophile is D260. Position 264 (H264) interacts with Ca(2+). The active-site Proton donor is the E290. G329, Y331, H435, D436, and D459 together coordinate Ca(2+).

Belongs to the glycosyl hydrolase 13 family. In terms of assembly, monomer. Ca(2+) serves as cofactor. The cofactor is Na(+).

Its subcellular location is the secreted. It catalyses the reaction Endohydrolysis of (1-&gt;4)-alpha-D-glucosidic linkages in polysaccharides containing three or more (1-&gt;4)-alpha-linked D-glucose units.. This Bacillus licheniformis protein is Alpha-amylase (amyS).